Consider the following 485-residue polypeptide: MFS-type transporter phm3 (485 aa).

Residues 1–22 (MSLQDPTKEHNNTSPSPKDEKT) are disordered. 12 consecutive transmembrane segments (helical) span residues 55–75 (FTLY…LLVA), 83–103 (IVAS…PFLL), 113–133 (LWLY…CALS), 144–164 (FICG…IADL), 175–195 (ALFG…GGFV), 203–223 (WTFY…AVIM), 278–298 (PIVL…YLLF), 317–337 (GLAF…FAIL), 357–377 (LVLM…YGWS), 384–404 (WIVP…ILMP), 421–441 (ALAV…LAGP), and 449–469 (LGWG…VPFV).

The protein belongs to the major facilitator superfamily.

Its subcellular location is the cell membrane. In terms of biological role, MFS-type transporter; part of the gene cluster that mediates the biosynthesis of the trans-fused decalin-containing tetramic acid phomasetin. The polypeptide is MFS-type transporter phm3 (Pyrenochaetopsis sp).